Here is a 1163-residue protein sequence, read N- to C-terminus: DNA-directed RNA polymerase subunit beta' (1163 aa).

Residues Cys59, Cys61, Cys74, and Cys77 each coordinate Zn(2+). Mg(2+)-binding residues include Asp449, Asp451, and Asp453. Positions 794, 868, 875, and 878 each coordinate Zn(2+).

It belongs to the RNA polymerase beta' chain family. The RNAP catalytic core consists of 2 alpha, 1 beta, 1 beta' and 1 omega subunit. When a sigma factor is associated with the core the holoenzyme is formed, which can initiate transcription. Mg(2+) is required as a cofactor. Requires Zn(2+) as cofactor.

The enzyme catalyses RNA(n) + a ribonucleoside 5'-triphosphate = RNA(n+1) + diphosphate. Functionally, DNA-dependent RNA polymerase catalyzes the transcription of DNA into RNA using the four ribonucleoside triphosphates as substrates. The polypeptide is DNA-directed RNA polymerase subunit beta' (Caldicellulosiruptor saccharolyticus (strain ATCC 43494 / DSM 8903 / Tp8T 6331)).